The following is an 819-amino-acid chain: Zinc finger protein 27 (819 aa).

The KRAB domain maps to 1–75 (MDVTIDFSRE…KTLGAESCHD (75 aa)). Positions 93–123 (PKRPRHWDPPEDEPKHSSDLQTHDESNGLKR) are disordered. Basic and acidic residues predominate over residues 98–120 (HWDPPEDEPKHSSDLQTHDESNG). 21 C2H2-type zinc fingers span residues 205–227 (YVCV…QKTH), 233–255 (YKCG…RRIH), 261–283 (YDCS…QKIH), 289–311 (HGCV…QKIH), 317–339 (YVCI…RRIH), 345–367 (YACD…QRIH), 401–423 (SICA…QRTH), 429–451 (YQCG…RRIH), 457–479 (YVCV…QVIH), 485–507 (YQCG…KRIH), 513–535 (YVCS…QKTH), 541–563 (YVCA…QRIH), 569–591 (YGCS…EKIH), 597–619 (YGCR…QKIH), 625–647 (HVCA…QRIH), 653–675 (YGCT…RPIH), 681–703 (YVCA…QKTH), 709–731 (YACS…HRIH), 737–759 (YDCG…QRIH), 765–787 (YRCA…QTTH), and 793–815 (YKCV…ENVH).

This sequence belongs to the krueppel C2H2-type zinc-finger protein family.

It localises to the nucleus. In terms of biological role, may be involved in transcriptional regulation. The polypeptide is Zinc finger protein 27 (Zfp27) (Mus musculus (Mouse)).